Reading from the N-terminus, the 266-residue chain is Energy-coupling factor transporter transmembrane protein EcfT (266 aa).

The next 5 membrane-spanning stretches (helical) occupy residues 32 to 52 (IIVV…AFTV), 71 to 91 (PLLW…PAGG), 107 to 127 (LINA…STLL), 152 to 172 (VPVD…PTLM), and 246 to 266 (DTVT…FRHW).

The protein belongs to the energy-coupling factor EcfT family. Forms a stable energy-coupling factor (ECF) transporter complex composed of 2 membrane-embedded substrate-binding proteins (S component), 2 ATP-binding proteins (A component) and 2 transmembrane proteins (T component). May be able to interact with more than 1 S component at a time.

Its subcellular location is the cell membrane. Its function is as follows. Transmembrane (T) component of an energy-coupling factor (ECF) ABC-transporter complex. Unlike classic ABC transporters this ECF transporter provides the energy necessary to transport a number of different substrates. The polypeptide is Energy-coupling factor transporter transmembrane protein EcfT (Levilactobacillus brevis (strain ATCC 367 / BCRC 12310 / CIP 105137 / JCM 1170 / LMG 11437 / NCIMB 947 / NCTC 947) (Lactobacillus brevis)).